Here is a 227-residue protein sequence, read N- to C-terminus: Adenylate kinase (227 aa).

Residue 21–26 coordinates ATP; sequence GAGKGT. The segment at 41–70 is NMP; sequence ATGDMLRSQVAKQTPLGIEAKKIMDDGKLV. AMP contacts are provided by residues Thr-42, Arg-47, 68-70, 97-100, and Gln-104; these read KLV and GFPR. Residues 138-175 form an LID region; it reads GRLVHPASGRSYHKVFNPPKTEMKDDITGEDLVQRSDD. ATP-binding positions include Arg-139 and 148-149; that span reads SY. Residues Arg-172 and Arg-183 each coordinate AMP. An ATP-binding site is contributed by Gln-211.

It belongs to the adenylate kinase family. AK2 subfamily. As to quaternary structure, monomer.

The protein localises to the cytoplasm. It is found in the cytosol. It localises to the mitochondrion intermembrane space. It catalyses the reaction AMP + ATP = 2 ADP. Catalyzes the reversible transfer of the terminal phosphate group between ATP and AMP. Plays an important role in cellular energy homeostasis and in adenine nucleotide metabolism. Adenylate kinase activity is critical for regulation of the phosphate utilization and the AMP de novo biosynthesis pathways. The sequence is that of Adenylate kinase from Kluyveromyces lactis (strain ATCC 8585 / CBS 2359 / DSM 70799 / NBRC 1267 / NRRL Y-1140 / WM37) (Yeast).